Here is a 282-residue protein sequence, read N- to C-terminus: 4-diphosphocytidyl-2-C-methyl-D-erythritol kinase (282 aa).

Lys-11 is an active-site residue. 93 to 103 serves as a coordination point for ATP; sequence LVSAGLAGGSA. Asp-133 is a catalytic residue.

Belongs to the GHMP kinase family. IspE subfamily.

It carries out the reaction 4-CDP-2-C-methyl-D-erythritol + ATP = 4-CDP-2-C-methyl-D-erythritol 2-phosphate + ADP + H(+). Its pathway is isoprenoid biosynthesis; isopentenyl diphosphate biosynthesis via DXP pathway; isopentenyl diphosphate from 1-deoxy-D-xylulose 5-phosphate: step 3/6. Its function is as follows. Catalyzes the phosphorylation of the position 2 hydroxy group of 4-diphosphocytidyl-2C-methyl-D-erythritol. This chain is 4-diphosphocytidyl-2-C-methyl-D-erythritol kinase, found in Ehrlichia canis (strain Jake).